A 554-amino-acid chain; its full sequence is 4-coumarate--CoA ligase 3 (554 aa).

ATP contacts are provided by Ser188, Ser189, Gly190, Thr191, Thr192, and Lys196. Residues Tyr238 and Ser242 each coordinate (E)-4-coumaroyl-AMP. Residue Lys259 participates in CoA binding. Residues 261 to 330 are SBD1; sequence DLGALVDLVR…AKIPNAVLGQ (70 aa). Residues Ala308, Gln330, Gly331, Thr335, and Met343 each contribute to the (E)-4-coumaroyl-AMP site. 3 residues coordinate ATP: Gln330, Gly331, and Thr335. The SBD2 stretch occupies residues 331–398; that stretch reads GYGMTEAGPV…IRGEQIMKGY (68 aa). ATP-binding residues include Asp419 and Arg434. (E)-4-coumaroyl-AMP contacts are provided by Lys436 and Lys440. CoA is bound by residues Lys442 and Gly443. Lys525 provides a ligand contact to ATP.

Belongs to the ATP-dependent AMP-binding enzyme family. The cofactor is Mg(2+). As to expression, expressed in root exodermis and epidermis cells, stem vascular cells, leaf developing vascular bundle cells and parenchyma cells, lemma, palea, stamens and pistil.

It catalyses the reaction (E)-ferulate + ATP + CoA = (E)-feruloyl-CoA + AMP + diphosphate. The enzyme catalyses (E)-4-coumarate + ATP + CoA = (E)-4-coumaroyl-CoA + AMP + diphosphate. The catalysed reaction is (E)-caffeate + ATP + CoA = (E)-caffeoyl-CoA + AMP + diphosphate. It carries out the reaction (E)-cinnamate + ATP + CoA = (E)-cinnamoyl-CoA + AMP + diphosphate. It catalyses the reaction (E)-ferulate + ATP + H(+) = (E)-feruloyl-AMP + diphosphate. The enzyme catalyses (E)-feruloyl-AMP + CoA = (E)-feruloyl-CoA + AMP + H(+). The catalysed reaction is (E)-4-coumarate + ATP + H(+) = (E)-4-coumaroyl-AMP + diphosphate. It carries out the reaction (E)-4-coumaroyl-AMP + CoA = (E)-4-coumaroyl-CoA + AMP + H(+). It catalyses the reaction (E)-caffeate + ATP + H(+) = (E)-caffeoyl-AMP + diphosphate. The enzyme catalyses (E)-caffeoyl-AMP + CoA = (E)-caffeoyl-CoA + AMP + H(+). It participates in phytoalexin biosynthesis; 3,4',5-trihydroxystilbene biosynthesis; 3,4',5-trihydroxystilbene from trans-4-coumarate: step 1/2. Involved in the phenylpropanoid metabolism by mediating the activation of a number of hydroxycinnamates for the biosynthesis of monolignols and other phenolic secondary metabolites. Catalyzes the formation of CoA esters of cinnamate, 4-coumarate, caffeate and ferulate. Is more efficient with substrates in the following order: ferulate &gt; 4-coumarate &gt; caffeate &gt; cinnamate. Possesses very high activity compared to 4CL1, 4CL2, 4CL4 and 4CL5. Cannot convert sinapate to its corresponding CoA ester. May play a role in the synthesis of lignin as well as other phenolic compounds. Follows a two-step reaction mechanism, wherein the carboxylate substrate first undergoes adenylation by ATP, followed by a thioesterification in the presence of CoA to yield the final CoA thioester. The protein is 4-coumarate--CoA ligase 3 of Oryza sativa subsp. japonica (Rice).